Here is a 235-residue protein sequence, read N- to C-terminus: Phosphoribosylformylglycinamidine synthase subunit PurQ (235 aa).

The Glutamine amidotransferase type-1 domain maps to 5–235; that stretch reads FGVVVFPGSN…LLNHVSIVAA (231 aa). Residue Cys-88 is the Nucleophile of the active site. Catalysis depends on residues His-205 and Glu-207.

In terms of assembly, part of the FGAM synthase complex composed of 1 PurL, 1 PurQ and 2 PurS subunits.

Its subcellular location is the cytoplasm. The catalysed reaction is N(2)-formyl-N(1)-(5-phospho-beta-D-ribosyl)glycinamide + L-glutamine + ATP + H2O = 2-formamido-N(1)-(5-O-phospho-beta-D-ribosyl)acetamidine + L-glutamate + ADP + phosphate + H(+). It carries out the reaction L-glutamine + H2O = L-glutamate + NH4(+). It participates in purine metabolism; IMP biosynthesis via de novo pathway; 5-amino-1-(5-phospho-D-ribosyl)imidazole from N(2)-formyl-N(1)-(5-phospho-D-ribosyl)glycinamide: step 1/2. Functionally, part of the phosphoribosylformylglycinamidine synthase complex involved in the purines biosynthetic pathway. Catalyzes the ATP-dependent conversion of formylglycinamide ribonucleotide (FGAR) and glutamine to yield formylglycinamidine ribonucleotide (FGAM) and glutamate. The FGAM synthase complex is composed of three subunits. PurQ produces an ammonia molecule by converting glutamine to glutamate. PurL transfers the ammonia molecule to FGAR to form FGAM in an ATP-dependent manner. PurS interacts with PurQ and PurL and is thought to assist in the transfer of the ammonia molecule from PurQ to PurL. This chain is Phosphoribosylformylglycinamidine synthase subunit PurQ, found in Salinibacter ruber (strain DSM 13855 / M31).